Reading from the N-terminus, the 134-residue chain is Z-ring associated protein G (134 aa).

Residues 7 to 27 (EIWVAIGIAFIVGLFIGYIIV) traverse the membrane as a helical segment. Positions 107–134 (ATDKSQNEQPRDYSEGASGLFKENKEEN) are disordered. Residues 111 to 120 (SQNEQPRDYS) show a composition bias toward basic and acidic residues.

The protein belongs to the ZapG family.

It is found in the cell inner membrane. In terms of biological role, involved in cell division, cell envelope biogenesis and cell shape maintenance. The protein is Z-ring associated protein G of Haemophilus influenzae (strain ATCC 51907 / DSM 11121 / KW20 / Rd).